The primary structure comprises 348 residues: UPF0324 membrane protein BPP3732 (348 aa).

10 consecutive transmembrane segments (helical) span residues 20–39, 43–62, 98–120, 135–157, 164–186, 196–215, 235–257, 267–286, 299–318, and 322–344; these read GILF…DLPF, FGFS…GNFL, IAAV…LLIG, AMLT…EPTL, SAVA…PVIY, QALG…VVGA, VALL…AAGA, VPWF…LDIL, VFVL…FAQI, and GPRV…YGIV.

The protein belongs to the UPF0324 family.

Its subcellular location is the cell membrane. The sequence is that of UPF0324 membrane protein BPP3732 from Bordetella parapertussis (strain 12822 / ATCC BAA-587 / NCTC 13253).